The sequence spans 338 residues: Putative peptide import ATP-binding protein BruAb2_0796 (338 aa).

One can recognise an ABC transporter domain in the interval leucine 7–leucine 263. Position 43–50 (glycine 43–serine 50) interacts with ATP.

The protein belongs to the ABC transporter superfamily. As to quaternary structure, the complex is composed of two ATP-binding proteins (BruAb2_0796 and BruAb2_0797), two transmembrane proteins (BruAb2_0794) and a solute-binding protein (BruAb2_0792).

It localises to the cell inner membrane. Its function is as follows. Probably part of an ABC transporter complex that could be involved in peptide import. Probably responsible for energy coupling to the transport system. The chain is Putative peptide import ATP-binding protein BruAb2_0796 from Brucella abortus biovar 1 (strain 9-941).